The sequence spans 459 residues: uncharacterized protein (459 aa).

A TRAM domain is found at 6–64 (KNKQEKNIIITIKRLGINGEGIGYYKKKIIFIPGALPNEVVVAKIVDRHPHYLEGELVR). Residues Gln-289, Tyr-318, Glu-339, and Asp-387 each contribute to the S-adenosyl-L-methionine site. The active-site Nucleophile is Cys-414.

Belongs to the class I-like SAM-binding methyltransferase superfamily. RNA M5U methyltransferase family.

This is an uncharacterized protein from Lactobacillus johnsonii (strain CNCM I-12250 / La1 / NCC 533).